We begin with the raw amino-acid sequence, 437 residues long: Methylenetetrahydrofolate--tRNA-(uracil-5-)-methyltransferase TrmFO (437 aa).

10-15 (GAGLAG) provides a ligand contact to FAD.

It belongs to the MnmG family. TrmFO subfamily. It depends on FAD as a cofactor.

It is found in the cytoplasm. It carries out the reaction uridine(54) in tRNA + (6R)-5,10-methylene-5,6,7,8-tetrahydrofolate + NADH + H(+) = 5-methyluridine(54) in tRNA + (6S)-5,6,7,8-tetrahydrofolate + NAD(+). The catalysed reaction is uridine(54) in tRNA + (6R)-5,10-methylene-5,6,7,8-tetrahydrofolate + NADPH + H(+) = 5-methyluridine(54) in tRNA + (6S)-5,6,7,8-tetrahydrofolate + NADP(+). Its function is as follows. Catalyzes the folate-dependent formation of 5-methyl-uridine at position 54 (M-5-U54) in all tRNAs. The sequence is that of Methylenetetrahydrofolate--tRNA-(uracil-5-)-methyltransferase TrmFO from Brevibacillus brevis (strain 47 / JCM 6285 / NBRC 100599).